The primary structure comprises 20 residues: Dihydrolipoamide-residue succinyltransferase component of 2-oxoglutarate dehydrogenase complex (20 aa).

Belongs to the 2-oxoacid dehydrogenase family. In terms of assembly, forms a 24-polypeptide structural core with octahedral symmetry. The cofactor is (R)-lipoate.

It localises to the mitochondrion membrane. The enzyme catalyses N(6)-[(R)-dihydrolipoyl]-L-lysyl-[protein] + succinyl-CoA = N(6)-[(R)-S(8)-succinyldihydrolipoyl]-L-lysyl-[protein] + CoA. The protein operates within amino-acid degradation; L-lysine degradation via saccharopine pathway; glutaryl-CoA from L-lysine: step 6/6. The 2-oxoglutarate dehydrogenase complex catalyzes the overall conversion of 2-oxoglutarate to succinyl-CoA and CO(2). It contains multiple copies of three enzymatic components: 2-oxoglutarate dehydrogenase (E1), dihydrolipoamide succinyltransferase (E2) and lipoamide dehydrogenase (E3). The protein is Dihydrolipoamide-residue succinyltransferase component of 2-oxoglutarate dehydrogenase complex of Solanum tuberosum (Potato).